Here is a 261-residue protein sequence, read N- to C-terminus: Na(+)-translocating NADH-quinone reductase subunit C (261 aa).

The chain crosses the membrane as a helical span at residues 12 to 32 (LGVVIGLSLVCSIIVSTAAVG). Thr229 carries the FMN phosphoryl threonine modification.

The protein belongs to the NqrC family. Composed of six subunits; NqrA, NqrB, NqrC, NqrD, NqrE and NqrF. FMN serves as cofactor.

It localises to the cell inner membrane. The enzyme catalyses a ubiquinone + n Na(+)(in) + NADH + H(+) = a ubiquinol + n Na(+)(out) + NAD(+). NQR complex catalyzes the reduction of ubiquinone-1 to ubiquinol by two successive reactions, coupled with the transport of Na(+) ions from the cytoplasm to the periplasm. NqrA to NqrE are probably involved in the second step, the conversion of ubisemiquinone to ubiquinol. The protein is Na(+)-translocating NADH-quinone reductase subunit C of Vibrio parahaemolyticus serotype O3:K6 (strain RIMD 2210633).